Consider the following 444-residue polypeptide: uncharacterized protein (444 aa).

The next 12 membrane-spanning stretches (helical) occupy residues 2-22, 24-44, 52-72, 106-126, 134-154, 174-194, 228-248, 261-281, 305-325, 343-363, 377-397, and 424-444; these read PILIVAVGVLILLFLIIKVKL, TFVSLIVVSFLVAIGLGMDIN, TGIGGQLGHLALVFGLGAMLG, FIIGIALFFEVGLVLLIPIVY, MPFLYLGIPMAAALNVTHGFL, VLLFGIIIAVPTTVIAGPLFN, FAISAVTSLFPVIFMAMATIF, IIEFIGTPGTAMLISLLLALY, IAMMLLIIGGGGAFKQVLIDG, LFVAWTIAAVLRLCLGSATVA, AGSVNPALMVLATGAGSVIAC, and LLTTVLSVTGLGCVLLAGLVM.

This sequence belongs to the GntP permease family.

It is found in the cell membrane. This is an uncharacterized protein from Bacillus subtilis (strain 168).